Consider the following 405-residue polypeptide: N-methyltransferase nanE (405 aa).

S-adenosyl-L-methionine contacts are provided by residues 238–239, Asp261, and 290–291; these read GG and HH.

Belongs to the class I-like SAM-binding methyltransferase superfamily. Cation-independent O-methyltransferase family.

The protein operates within secondary metabolite biosynthesis. In terms of biological role, N-methyltransferase; part of the gene cluster that mediates the biosynthesis of the benzazepine alkaloid nanangelenin A which contains an unprecedented 3,4-dihydro-1-benzazepine-2,5-dione-N-prenyl-N-acetoxy-anthranilamide scaffold. The first step of nanangelenin biosynthesis is catalyzed by the indoleamine 2,3-dioxygenase nanC which produces N-formyl-kynurenine through the catabolism of tryptophan. The two-module NRPS nanA then utilizes anthranilate (Ant) and L-kynurenine (L-Kyn) to assemble the dipeptide product nanangelenin B. The first adenylation domain of nanA (A1) loads anthranilate onto the T1 domain, while A2 loads kynurenine, generated through spontaneous nonenzymatic deformylation of the nanC-supplied N-formyl-kynurenine. The peptide bond formation between the tethered amino acids is catalyzed by the first condensation domain (C1) between anthranilate's carbonyl carbon and kynurenine's aliphatic primary amine. The second C domain (C2) catalyzes the final cyclization event between the aromatic amine of kynurenine and the tethered carbonyl carbon, yielding nanangelenin B. The terminal T3 domain enhances the catalytic efficiency of C2, suggesting the T2-tethered Ant-L-Kyn is transferred to T3 prior to cyclization by C2. Once released from nanA, nanangelenin B is then prenylated by the prenyltransferase nanD to form nanangelenin C. Nanangelenin C is then N-hydroxylated by the FAD-dependent monooxygenase nanF and further acetylated by the acetyltransferase nanB to yield nanangelenin F. Finally, the N-methyltransferase nanE methylates the amide nitrogen of 1-benzazepine to convert nanangelenin F into nanangelenin A. NanE is also able to methylate most of the intermediates of the pathway such as nanangelenin B and nanangelenin C to produce nanangelenin D and nanangelenin E, respectively. The polypeptide is N-methyltransferase nanE (Aspergillus nanangensis).